The primary structure comprises 466 residues: Asparagine--tRNA ligase (466 aa).

Belongs to the class-II aminoacyl-tRNA synthetase family. In terms of assembly, homodimer.

It is found in the cytoplasm. It carries out the reaction tRNA(Asn) + L-asparagine + ATP = L-asparaginyl-tRNA(Asn) + AMP + diphosphate + H(+). The protein is Asparagine--tRNA ligase of Sodalis glossinidius (strain morsitans).